The following is a 439-amino-acid chain: Mitochondrial distribution and morphology protein 12 (439 aa).

In terms of domain architecture, SMP-LTD spans Met1 to Ile439. A compositionally biased stretch (acidic residues) spans Tyr70–Leu85. Disordered regions lie at residues Tyr70 to Glu102, Ser184 to Met274, and Gly353 to Gly386. Positions Gly197–Pro212 are enriched in basic and acidic residues. The segment covering Asp215–Pro230 has biased composition (polar residues). Over residues Ser231–Ser240 the composition is skewed to low complexity. The span at Arg247 to Asp261 shows a compositional bias: basic and acidic residues.

It belongs to the MDM12 family. In terms of assembly, component of the ER-mitochondria encounter structure (ERMES) or MDM complex, composed of mmm1, mdm10, mdm12 and mdm34. A mmm1 homodimer associates with one molecule of mdm12 on each side in a pairwise head-to-tail manner, and the SMP-LTD domains of mmm1 and mdm12 generate a continuous hydrophobic tunnel for phospholipid trafficking.

The protein localises to the mitochondrion outer membrane. The protein resides in the endoplasmic reticulum membrane. Functionally, component of the ERMES/MDM complex, which serves as a molecular tether to connect the endoplasmic reticulum (ER) and mitochondria. Components of this complex are involved in the control of mitochondrial shape and protein biogenesis, and function in nonvesicular lipid trafficking between the ER and mitochondria. Mdm12 is required for the interaction of the ER-resident membrane protein mmm1 and the outer mitochondrial membrane-resident beta-barrel protein mdm10. The mdm12-mmm1 subcomplex functions in the major beta-barrel assembly pathway that is responsible for biogenesis of all mitochondrial outer membrane beta-barrel proteins, and acts in a late step after the SAM complex. The mdm10-mdm12-mmm1 subcomplex further acts in the TOM40-specific pathway after the action of the mdm12-mmm1 complex. Essential for establishing and maintaining the structure of mitochondria and maintenance of mtDNA nucleoids. This chain is Mitochondrial distribution and morphology protein 12, found in Neosartorya fischeri (strain ATCC 1020 / DSM 3700 / CBS 544.65 / FGSC A1164 / JCM 1740 / NRRL 181 / WB 181) (Aspergillus fischerianus).